The following is a 252-amino-acid chain: Protein IL-40 (252 aa).

The N-terminal stretch at 1–18 (MALLQLLLFAMLAACGFS) is a signal peptide. Residues Asn82 and Asn177 are each glycosylated (N-linked (GlcNAc...) asparagine).

Expressed in bone marrow, spleen and lymph node.

It localises to the secreted. Probable B cell-associated cytokine that plays a role in the regulation of humoral immune responses. Involved in lymphocyte B cell development and immunoglobulin/IgA production. The polypeptide is Protein IL-40 (Mus musculus (Mouse)).